The primary structure comprises 252 residues: CLAVATA3/ESR (CLE)-related protein 4A-2 (252 aa).

A signal peptide spans 1 to 21; sequence MAKNAMLCLLILRVVLALAFA. Positions 21-83 are required for secretion from the host cytoplasm to the host apoplasm; it reads ATNKKGDEEP…SNQLPNNNWM (63 aa). A glycan (N-linked (GlcNAc...) asparagine) is linked at asparagine 32. The segment at 116 to 252 is disordered; it reads RKTGMHSQRH…APAGPDPIHH (137 aa). Composition is skewed to basic and acidic residues over residues 125-137, 144-179, 186-200, and 207-242; these read HHEE…EKRV, PIHH…EKRV, PIHH…EKRA, and PTHH…EKRG. One copy of the A-1 repeat lies at 127 to 135; it reads EETTLEQEK. A 6 X approximate repeat A region spans residues 127–219; it reads EETTLEQEKR…HEETTLEQEK (93 aa). A CLE-1 repeat occupies 136–147; sequence RVAGAGPDPIHH. The segment at 136–252 is 6 X approximate repeat CLE; the sequence is RVAGAGPDPI…APAGPDPIHH (117 aa). The A-2 repeat unit spans residues 148–156; that stretch reads QDTTLEQEK. Residues 157–168 form a CLE-2 repeat; that stretch reads RAVPAGPDPKHH. An A-3 repeat occupies 169–177; it reads EETTLEQEK. The stretch at 178–189 is one CLE-3 repeat; sequence RVAGAGPDPIHH. The A-4 repeat unit spans residues 190-198; it reads QDTTLEQEK. Residues 199 to 210 form a CLE-4 repeat; sequence RAVPAGPDPTHH. The A-5 repeat unit spans residues 211–219; it reads EETTLEQEK. One copy of the CLE-5 repeat lies at 220-231; the sequence is RAVPAGPDPKHH. An A-6 repeat occupies 232–240; it reads EETTFEQEK. One copy of the CLE-6 repeat lies at 241-252; the sequence is RGAPAGPDPIHH.

The protein belongs to the CLV3/ESR signal peptide family. Highly expressed exclusively within the dorsal esophageal gland cell during syncytium formation in host plants.

Its subcellular location is the secreted. The protein resides in the host cytoplasm. The protein localises to the host extracellular space. It is found in the extracellular space. It localises to the apoplast. Its function is as follows. Mimics host plant CLE extracellular signal peptides that regulate cell fate. May play a role in the differentiation or division of feeding cells (syncytia) induced in plant roots during infection. In Globodera rostochiensis (Golden nematode worm), this protein is CLAVATA3/ESR (CLE)-related protein 4A-2 (CLE-4A-2).